A 158-amino-acid chain; its full sequence is MRQIPLVVVLLLAYAARLQGLISVTNAAVGAKPGPHAGRDLDGSTTSMSVNVDDEERGLSDMLKRLRSMLFDANSATKGQALKKDAKSTKSVKAAGAASNAKKVGQLRHMWNQIKNVEYKGNVKYLAIIYVICILSVLGILGTVFAINRNISNQYIHE.

A signal peptide spans 1-20; the sequence is MRQIPLVVVLLLAYAARLQG. Residues 39-57 carry the RxLR-dEER motif; sequence RDLDGSTTSMSVNVDDEER. The host BKI1-binding stretch occupies residues 120–158; it reads KGNVKYLAIIYVICILSVLGILGTVFAINRNISNQYIHE. Residues 127–147 form a helical membrane-spanning segment; the sequence is AIIYVICILSVLGILGTVFAI. N-linked (GlcNAc...) asparagine glycosylation is present at asparagine 150.

Belongs to the RxLR effector family. As to quaternary structure, interacts with host BKI1.

It localises to the secreted. It is found in the host cell membrane. In terms of biological role, secreted effector that suppresses pathogen-associated molecular pattern (PAMP)-triggered immunity (PTI) in host plants. Suppresses both defense-related brassinosteroid (BR) and ERECTA (ER) signaling pathways in planta by interacting with host BRI1 kinase inhibitor 1 (BKI1) at the host plasma membrane, leading to a host dwarf phenotype. The sequence is that of Secreted RxLR effector protein 131 from Plasmopara viticola (Downy mildew of grapevine).